Here is a 398-residue protein sequence, read N- to C-terminus: Phosphoglycerate kinase (398 aa).

Substrate is bound by residues 21-23 (DIN), arginine 37, 60-63 (HQGR), arginine 117, and arginine 157. Residues glutamate 332 and 357–360 (GGDT) each bind ATP.

This sequence belongs to the phosphoglycerate kinase family. As to quaternary structure, monomer.

It is found in the cytoplasm. It carries out the reaction (2R)-3-phosphoglycerate + ATP = (2R)-3-phospho-glyceroyl phosphate + ADP. Its pathway is carbohydrate degradation; glycolysis; pyruvate from D-glyceraldehyde 3-phosphate: step 2/5. In Halobacterium salinarum (strain ATCC 29341 / DSM 671 / R1), this protein is Phosphoglycerate kinase.